Consider the following 265-residue polypeptide: Thiazole synthase (265 aa).

Residue lysine 106 is the Schiff-base intermediate with DXP of the active site. 1-deoxy-D-xylulose 5-phosphate is bound by residues glycine 167, 193-194, and 215-216; these read AG and NS.

The protein belongs to the ThiG family. In terms of assembly, homotetramer. Forms heterodimers with either ThiH or ThiS.

The protein localises to the cytoplasm. It catalyses the reaction [ThiS sulfur-carrier protein]-C-terminal-Gly-aminoethanethioate + 2-iminoacetate + 1-deoxy-D-xylulose 5-phosphate = [ThiS sulfur-carrier protein]-C-terminal Gly-Gly + 2-[(2R,5Z)-2-carboxy-4-methylthiazol-5(2H)-ylidene]ethyl phosphate + 2 H2O + H(+). Its pathway is cofactor biosynthesis; thiamine diphosphate biosynthesis. Its function is as follows. Catalyzes the rearrangement of 1-deoxy-D-xylulose 5-phosphate (DXP) to produce the thiazole phosphate moiety of thiamine. Sulfur is provided by the thiocarboxylate moiety of the carrier protein ThiS. In vitro, sulfur can be provided by H(2)S. This chain is Thiazole synthase, found in Prochlorococcus marinus subsp. pastoris (strain CCMP1986 / NIES-2087 / MED4).